A 133-amino-acid chain; its full sequence is DNA-binding protein inhibitor ID-2-A (133 aa).

In terms of domain architecture, bHLH spans alanine 23–leucine 75. The short motif at leucine 106–leucine 115 is the Nuclear export signal element.

As to quaternary structure, heterodimer with other HLH proteins. As to expression, in the embryo, expressed in a range of tissues, with primary expression in the developing pronephros; expressed in the pronephric anlage, and by the swimming tadpole stages expressed robustly in the pronephric tubules and weakly in the pronephric duct. Expressed in the secondary heart field. In the developing nervous system, expressed in the neural crest and in the neural folds during neurula stages, and at stage 20 in the neural tube, ventral mesoderm and mid-hindbrain boundary. By early tailbud stages, expressed in the neural tube, somites and branchial arches. In tadpoles (stage 37/38), expressed in the heart, eye, otic vesicle, somites and branchial arches. Also expressed in migrating muscle cells. Expressed at a low level in limbs, with expression decreasing as limbs develop, but expressed at a high level in blastemas (regenerated limbs), where expression is localized primarily to the blastemal epidermis. Widely expressed in adults with highest expression in the spleen, skin, intestine and brain, and at a much lower level in testis and heart.

It is found in the cytoplasm. The protein localises to the nucleus. In terms of biological role, transcriptional regulator (lacking a basic DNA binding domain) which negatively regulates the basic helix-loop-helix (bHLH) transcription factors by forming heterodimers and inhibiting their DNA binding and transcriptional activity. Inhibits the activity of both neurogenic (neurod1/neuroD) and myogenic (myod1/myoD) bHLH factors. May play a role in the regulation of the circadian clock. The sequence is that of DNA-binding protein inhibitor ID-2-A (id2-a) from Xenopus laevis (African clawed frog).